A 1671-amino-acid polypeptide reads, in one-letter code: DENN domain-containing protein Crag (1671 aa).

Residues 39-195 enclose the MABP domain; that stretch reads IEPITDIGVY…DVYLCYKKSM (157 aa). The uDENN domain occupies 187–364; the sequence is VYLCYKKSMY…DEVPFPAPSI (178 aa). A cDENN domain is found at 385–521; the sequence is PLPRSGAGFH…AARLLRQTLT (137 aa). Residues 523–632 form the dDENN domain; the sequence is LENAKPISYD…ERSFVSDGDH (110 aa). 3 disordered regions span residues 997–1160, 1245–1311, and 1415–1435; these read QQQQ…PVAS, ANST…RLSE, and VEES…ANGN. Composition is skewed to acidic residues over residues 1011–1023 and 1050–1061; these read GDDD…EDEY and YEADEEDEDEVD. A compositionally biased stretch (polar residues) spans 1072 to 1089; that stretch reads RVQSPTKISPRTPVTQND. The segment covering 1100–1119 has biased composition (low complexity); the sequence is AASATPTQETQQEQQHSQSQ. Over residues 1136–1147 the composition is skewed to polar residues; sequence RSATFDESTQIG. Residues 1254–1277 are compositionally biased toward basic residues; it reads NGHHPHGLHHGHHHPHHHHHHHSQ. The segment covering 1281-1301 has biased composition (basic and acidic residues); it reads AEQEEHDAAVHEEGKLRRVSS.

Interacts with Cam. Interacts with Rab10. Interacts (via the DENN domains) with Rab11. Expressed in the adult head and body.

The protein resides in the cytoplasm. It localises to the cell cortex. Its subcellular location is the early endosome. It is found in the recycling endosome. The protein localises to the cytoplasmic granule. Calmodulin-binding protein that acts as a guanine exchange factor for Rab10 and Rab11. Essential for maintenance of adult photoreceptor cells. Upon light stimulation, required for trafficking of newly synthesized ninaE (Rh1) from the trans-Golgi network to rhabdomere membranes via Rab11-dependent vesicular transport. During egg development, essential for establishing and maintaining epithelial cell polarity by regulating the correct polarized deposition of basal membrane (BM) proteins in follicular epithelial (FE) cells. Functions by targeting Rab10 to the basal cytoplasm, where it restricts the secretion of BM proteins such as trol/Pcan and vkg/Coll IV to the basal surface. Appears to be involved in regulating the levels and distribution of the guanine nucleotide exchange factor strat, however the two proteins appear to have independent roles in regulating polarized BM protein secretion in the FE. The polypeptide is DENN domain-containing protein Crag (Drosophila melanogaster (Fruit fly)).